Consider the following 331-residue polypeptide: MRCVVFNLREEEAPYVEKWKQSHPGVVVDTYEEPLTAKNKELLKGYEGLVVMQFLAMEDEVYDYMGACKLKVLSTRTAGFDMYNATLLKKHGIRLTNVPSYSPNAIGEYALAAALQLTRHAREIETFVRKRDFRWQKPILSKELRCSRVGILGTGRIGQAAARLFKGVGAQVVGFDPYPNDAAKEWLTYVSMDELLSTSDVISLHMPATKDSHHLINAKTIAQMKDGVYLVNTARGAVIDSQALLDSLDKGKIAGAALDAYEFEGPYIPKDNGNNPITDTVYARLVAHERIIYTPHIAFYTETAIENMVFNSLDACTTVLRGEPCAAEIKL.

Residues 156-157 (RI), Asp-176, 206-207 (MP), 233-235 (TAR), and Asp-259 each bind NAD(+). Residue Arg-235 is part of the active site. The active site involves Glu-264. The active-site Proton donor is the His-296.

It belongs to the D-isomer specific 2-hydroxyacid dehydrogenase family.

The catalysed reaction is (R)-lactate + NAD(+) = pyruvate + NADH + H(+). This is D-lactate dehydrogenase (ldhD) from Treponema pallidum (strain Nichols).